A 267-amino-acid polypeptide reads, in one-letter code: tRNA-cytidine(32) 2-sulfurtransferase 1 (267 aa).

The PP-loop motif signature appears at 42-47 (SGGKDS). The [4Fe-4S] cluster site is built by Cys-117, Cys-120, and Cys-208.

Belongs to the TtcA family. As to quaternary structure, homodimer. Requires Mg(2+) as cofactor. [4Fe-4S] cluster serves as cofactor.

It localises to the cytoplasm. It catalyses the reaction cytidine(32) in tRNA + S-sulfanyl-L-cysteinyl-[cysteine desulfurase] + AH2 + ATP = 2-thiocytidine(32) in tRNA + L-cysteinyl-[cysteine desulfurase] + A + AMP + diphosphate + H(+). It functions in the pathway tRNA modification. Its function is as follows. Catalyzes the ATP-dependent 2-thiolation of cytidine in position 32 of tRNA, to form 2-thiocytidine (s(2)C32). The sulfur atoms are provided by the cysteine/cysteine desulfurase (IscS) system. The chain is tRNA-cytidine(32) 2-sulfurtransferase 1 from Francisella tularensis subsp. tularensis (strain FSC 198).